The following is a 334-amino-acid chain: Phospholipase A1 2 (334 aa).

Positions 1 to 23 (MMNLKYLLFFCLVQALHYCYAYG) are cleaved as a signal peptide. A propeptide spanning residues 24-33 (DPSLSNELDR) is cleaved from the precursor. A disulfide bridge links C37 with C120. Catalysis depends on S170, which acts as the Nucleophile. D198 functions as the Charge relay system in the catalytic mechanism. 2 disulfide bridges follow: C209/C214 and C252/C261. The active-site Charge relay system is the H263. Disulfide bonds link C278/C302, C279/C327, and C295/C300.

Belongs to the AB hydrolase superfamily. Lipase family. Not glycosylated. As to expression, expressed by the venom gland.

Its subcellular location is the secreted. The catalysed reaction is a 1,2-diacyl-sn-glycero-3-phosphocholine + H2O = a 2-acyl-sn-glycero-3-phosphocholine + a fatty acid + H(+). Its function is as follows. Catalyzes the hydrolysis of phosphatidylcholine with phospholipase A1 activity (6.3 U/ml). May act as an allergen and induce hemolytic activity. In Vespa affinis (Lesser banded hornet), this protein is Phospholipase A1 2.